The chain runs to 349 residues: Ethyl acetate hydrolase (349 aa).

Residues tyrosine 67–aspartate 300 enclose the AB hydrolase-1 domain. The Nucleophile role is filled by serine 139. Active-site residues include aspartate 293 and histidine 322.

It belongs to the AB hydrolase superfamily. Acetyl esterase family. In terms of assembly, homodimer.

It catalyses the reaction ethyl acetate + H2O = ethanol + acetate + H(+). Functionally, esterase that catalyzes the hydrolysis of ethyl acetate. Involved in the degradation of short chain methyl ketones (MEK) such as 2-butanone and 2-hexanone. In vitro, can also hydrolyze vinyl acetate, 4-nitrophenyl acetate, methyl acetate, propyl acetate, benzyl acetate and methyl propionate. The highest activities are obtained with acetic acid esters, but the alcohol group also plays an important role, as compounds with two carbon atoms in the alcohol moiety, i.e., vinyl and ethyl acetate, are by far the preferred substrates. This chain is Ethyl acetate hydrolase, found in Pseudomonas veronii.